We begin with the raw amino-acid sequence, 411 residues long: Citrate synthase (411 aa).

Residues His-304 and Asp-363 contribute to the active site.

Belongs to the citrate synthase family.

The enzyme catalyses oxaloacetate + acetyl-CoA + H2O = citrate + CoA + H(+). Its pathway is carbohydrate metabolism; tricarboxylic acid cycle; isocitrate from oxaloacetate: step 1/2. The chain is Citrate synthase (gltA) from Rickettsia helvetica.